A 111-amino-acid chain; its full sequence is Gene 21 protein (111 aa).

The protein is Gene 21 protein (21) of Mycobacterium (Mycobacteriophage L5).